We begin with the raw amino-acid sequence, 282 residues long: Biotin synthase (282 aa).

In terms of domain architecture, Radical SAM core spans 1–228 (MQEIFLCSIS…NARLMVAGGR (228 aa)). The [4Fe-4S] cluster site is built by Cys17, Cys21, and Cys24. Positions 61, 96, 154, and 221 each coordinate [2Fe-2S] cluster.

It belongs to the radical SAM superfamily. Biotin synthase family. Homodimer. [4Fe-4S] cluster serves as cofactor. The cofactor is [2Fe-2S] cluster.

The enzyme catalyses (4R,5S)-dethiobiotin + (sulfur carrier)-SH + 2 reduced [2Fe-2S]-[ferredoxin] + 2 S-adenosyl-L-methionine = (sulfur carrier)-H + biotin + 2 5'-deoxyadenosine + 2 L-methionine + 2 oxidized [2Fe-2S]-[ferredoxin]. The protein operates within cofactor biosynthesis; biotin biosynthesis; biotin from 7,8-diaminononanoate: step 2/2. Catalyzes the conversion of dethiobiotin (DTB) to biotin by the insertion of a sulfur atom into dethiobiotin via a radical-based mechanism. This Helicobacter pylori (strain HPAG1) protein is Biotin synthase.